The chain runs to 129 residues: Small ribosomal subunit protein uS11 (129 aa).

It belongs to the universal ribosomal protein uS11 family. As to quaternary structure, part of the 30S ribosomal subunit. Interacts with proteins S7 and S18. Binds to IF-3.

Functionally, located on the platform of the 30S subunit, it bridges several disparate RNA helices of the 16S rRNA. Forms part of the Shine-Dalgarno cleft in the 70S ribosome. The protein is Small ribosomal subunit protein uS11 of Pseudomonas entomophila (strain L48).